The primary structure comprises 971 residues: Nuclear factor NF-kappa-B p105 subunit (971 aa).

One can recognise an RHD domain in the interval 40–365 (PYLQILEQPK…EVQRKRQKLM (326 aa)). Cys59 bears the S-nitrosocysteine; alternate mark. Cys59 carries S-(15-deoxy-Delta12,14-prostaglandin J2-9-yl)cysteine; alternate lipidation. Lys323 participates in a covalent cross-link: Glycyl lysine isopeptide (Lys-Gly) (interchain with G-Cter in SUMO2). Ser335 bears the Phosphoserine; by PKA mark. A Nuclear localization signal motif is present at residues 358 to 363 (QRKRQK). The interval 370 to 392 (DSFGGGSGAGAGGGGMFGSGGGG) is GRR. Positions 433-971 (INTKFKNGPK…GQEGPIEGKI (539 aa)) are interaction with CFLAR. The residue at position 438 (Lys438) is an N6-acetyllysine; by EP300. The interval 439-470 (NGPKDCAKSDDEESLTLPEKETEGEGPSLPMA) is disordered. At Ser447 the chain carries Phosphoserine. ANK repeat units follow at residues 538–567 (NGDS…GLIS), 577–606 (LYQT…DLSL), 610–639 (WGNS…AAPL), 646–675 (EGLN…EVNA), 680–710 (SGRT…HVDS), and 714–743 (DGTT…DPLV). The segment at 646-680 (EGLNAIHIAVMSNSLPCLLLLVAAGAEVNAQEQKS) is essential for interaction with HIF1AN. At Asn674 the chain carries (3S)-3-hydroxyasparagine; by HIF1AN. At Ser755 the chain carries Phosphoserine. An ANK 7 repeat occupies 767–797 (PGTTPLDMAANWQVFDILNGKPYEPVFTSDD). The region spanning 801 to 888 (QGDMKQLTED…EAIEVIQAAF (88 aa)) is the Death domain. Residue Ser896 is modified to Phosphoserine. Position 910 is a phosphoserine; by GSK3-beta; in vitro (Ser910). A Phosphoserine modification is found at Ser926. 2 positions are modified to phosphoserine; by IKKB: Ser930 and Ser935. Ser940 is subject to Phosphoserine. Thr946 is modified (phosphothreonine).

In terms of assembly, component of the NF-kappa-B p65-p50 complex. Homodimer; component of the NF-kappa-B p50-p50 complex. Component of the NF-kappa-B p105-p50 complex. Component of the NF-kappa-B p50-c-Rel complex. Component of a complex consisting of the NF-kappa-B p50-p50 homodimer and BCL3. Also interacts with MAP3K8. NF-kappa-B p50 subunit interacts with NCOA3 coactivator, which may coactivate NF-kappa-B dependent expression via its histone acetyltransferase activity. Interacts with TSC22D3; this interaction prevents nuclear translocation and DNA-binding. Interacts with SPAG9 and UNC5CL. NFKB1/p105 interacts with CFLAR; the interaction inhibits p105 processing into p50. NFKB1/p105 forms a ternary complex with MAP3K8 and TNIP2. Interacts with GSK3B; the interaction prevents processing of p105 to p50. NFKB1/p50 interacts with NFKBIE. NFKB1/p50 interacts with NFKBIZ. Nuclear factor NF-kappa-B p50 subunit interacts with NFKBID. Directly interacts with MEN1. Interacts with HIF1AN. Interacts with FEM1AA; interaction is direct. Post-translationally, generation of the NF-kappa-B p50 (Nuclear factor NF-kappa-B p50 subunit) transcription factor takes place both cotranslationally and post-translationally via non-mutually exclusive mechanisms. A cotranslational processing allows the production of both p50 and p105 (Nuclear factor NF-kappa-B p105 subunit) from a single NFKB1 mRNA. While translation occurs, the particular unfolded structure after the GRR repeat region acts as a substrate for the proteasome, promoting degradation of the C-terminus. The GRR acts as a proteasomal 'stop signal', protecting the region upstream of the GRR from degradation and promoting generation of p50. It is unclear if limited proteasome degradation during cotranslational processing depends on ubiquitination. NF-kappa-B p50 is also generated post-translationally following ubiquitination by the KPC complex, leading to limited processing by the proteasome downstream of the GRR region, thereby generating p50. Phosphorylation at the C-terminus by IKBKB/IKKB acts as a signal for ubiquitination and promotes either complete degradation or processing to generate the NF-kappa-B p50 (Nuclear factor NF-kappa-B p50 subunit). Phosphorylation at Ser-910 primes p105 for proteolytic processing in response to TNF-alpha stimulation. Phosphorylation at Ser-926, Ser-930 and Ser-935 are required for BTRC/BTRCP-mediated ubiquitination and proteolysis. Phosphorylation at Ser-930 is also required for ubiquitination by the KPC complex and limited processing to generate NF-kappa-B p50 (Nuclear factor NF-kappa-B p50 subunit). In terms of processing, polyubiquitinated at multiple Lys residues in the C-terminus. Polyubiquitinated by the SCF(FBXW11) and SCF(BTRC) complexes following phosphorylation at Ser-926, Ser-930 and Ser-935, leading to its complete degradation. In contrast, polyubiquitination by the KPC complex following phosphorylation at Ser-930 leads to limited proteosomal processing and generation of the active NF-kappa-B p50 (Nuclear factor NF-kappa-B p50 subunit). Post-translationally, S-nitrosylation of Cys-59 affects DNA binding. The covalent modification of cysteine by 15-deoxy-Delta12,14-prostaglandin-J2 is autocatalytic and reversible. It may occur as an alternative to other cysteine modifications, such as S-nitrosylation and S-palmitoylation.

Its subcellular location is the cytoplasm. The protein resides in the nucleus. Its function is as follows. NF-kappa-B is a pleiotropic transcription factor present in almost all cell types and is the endpoint of a series of signal transduction events that are initiated by a vast array of stimuli related to many biological processes such as inflammation, immunity, differentiation, cell growth, tumorigenesis and apoptosis. NF-kappa-B is a homo- or heterodimeric complex formed by the Rel-like domain-containing proteins RELA/p65, RELB, NFKB1/p105, NFKB1/p50, REL and NFKB2/p52 and the heterodimeric p65-p50 complex appears to be most abundant one. The dimers bind at kappa-B sites in the DNA of their target genes and the individual dimers have distinct preferences for different kappa-B sites that they can bind with distinguishable affinity and specificity. Different dimer combinations act as transcriptional activators or repressors, respectively. NF-kappa-B is controlled by various mechanisms of post-translational modification and subcellular compartmentalization as well as by interactions with other cofactors or corepressors. NF-kappa-B complexes are held in the cytoplasm in an inactive state complexed with members of the NF-kappa-B inhibitor (I-kappa-B) family. In a conventional activation pathway, I-kappa-B is phosphorylated by I-kappa-B kinases (IKKs) in response to different activators, subsequently degraded thus liberating the active NF-kappa-B complex which translocates to the nucleus. NF-kappa-B heterodimeric p65-p50 and RelB-p50 complexes are transcriptional activators. The NF-kappa-B p50-p50 homodimer is a transcriptional repressor, but can act as a transcriptional activator when associated with BCL3. NFKB1 appears to have dual functions such as cytoplasmic retention of attached NF-kappa-B proteins by p105 and generation of p50 by a cotranslational processing. The proteasome-mediated process ensures the production of both p50 and p105 and preserves their independent function, although processing of NFKB1/p105 also appears to occur post-translationally. p50 binds to the kappa-B consensus sequence 5'-GGRNNYYCC-3', located in the enhancer region of genes involved in immune response and acute phase reactions. Plays a role in the regulation of apoptosis. In a complex with MAP3K8, NFKB1/p105 represses MAP3K8-induced MAPK signaling; active MAP3K8 is released by proteasome-dependent degradation of NFKB1/p105. P105 is the precursor of the active p50 subunit (Nuclear factor NF-kappa-B p50 subunit) of the nuclear factor NF-kappa-B. Acts as a cytoplasmic retention of attached NF-kappa-B proteins by p105. In terms of biological role, constitutes the active form, which associates with RELA/p65 to form the NF-kappa-B p65-p50 complex to form a transcription factor. Together with RELA/p65, binds to the kappa-B consensus sequence 5'-GGRNNYYCC-3', located in the enhancer region of genes involved in immune response and acute phase reactions. Functionally, isoform 3 (p98) (but not p84 or p105) acts as a transactivator of NF-kappa-B-regulated gene expression. Its function is as follows. Acts as an inhibitor of transactivation of p50 NF-kappa-B subunit, probably by sequestering it in the cytoplasm. The polypeptide is Nuclear factor NF-kappa-B p105 subunit (Nfkb1) (Mus musculus (Mouse)).